The primary structure comprises 163 residues: Thiol peroxidase (163 aa).

The region spanning 16–162 is the Thioredoxin domain; it reads LQVGDKALDF…FEAAIAAAKA (147 aa). Cys-58 serves as the catalytic Cysteine sulfenic acid (-SOH) intermediate. Cys-58 and Cys-92 form a disulfide bridge.

The protein belongs to the peroxiredoxin family. Tpx subfamily. In terms of assembly, homodimer.

The catalysed reaction is a hydroperoxide + [thioredoxin]-dithiol = an alcohol + [thioredoxin]-disulfide + H2O. Thiol-specific peroxidase that catalyzes the reduction of hydrogen peroxide and organic hydroperoxides to water and alcohols, respectively. Plays a role in cell protection against oxidative stress by detoxifying peroxides. This Streptococcus pneumoniae serotype 2 (strain D39 / NCTC 7466) protein is Thiol peroxidase.